The chain runs to 80 residues: ATP synthase subunit c (80 aa).

2 helical membrane passes run 11–31 (IAAAMMMGLAAIGASIGIGIL) and 53–73 (FFIVMGLVDAIPMIAVGLGLY).

The protein belongs to the ATPase C chain family. F-type ATPases have 2 components, F(1) - the catalytic core - and F(0) - the membrane proton channel. F(1) has five subunits: alpha(3), beta(3), gamma(1), delta(1), epsilon(1). F(0) has three main subunits: a(1), b(2) and c(10-14). The alpha and beta chains form an alternating ring which encloses part of the gamma chain. F(1) is attached to F(0) by a central stalk formed by the gamma and epsilon chains, while a peripheral stalk is formed by the delta and b chains.

The protein localises to the cell inner membrane. F(1)F(0) ATP synthase produces ATP from ADP in the presence of a proton or sodium gradient. F-type ATPases consist of two structural domains, F(1) containing the extramembraneous catalytic core and F(0) containing the membrane proton channel, linked together by a central stalk and a peripheral stalk. During catalysis, ATP synthesis in the catalytic domain of F(1) is coupled via a rotary mechanism of the central stalk subunits to proton translocation. In terms of biological role, key component of the F(0) channel; it plays a direct role in translocation across the membrane. A homomeric c-ring of between 10-14 subunits forms the central stalk rotor element with the F(1) delta and epsilon subunits. The protein is ATP synthase subunit c of Aeromonas hydrophila subsp. hydrophila (strain ATCC 7966 / DSM 30187 / BCRC 13018 / CCUG 14551 / JCM 1027 / KCTC 2358 / NCIMB 9240 / NCTC 8049).